The chain runs to 489 residues: WPP domain-interacting protein 1 (489 aa).

The segment at 49–73 (SNSVELGKPMSFDSPGDGGGAYSPV) is disordered. 3 consecutive short sequence motifs (nuclear localization signal) follow at residues 80–81 (RK), 83–84 (RR), and 104–105 (KR). Residues 195–264 (PMISSGQGGN…DDAGGEGGES (70 aa)) are disordered. Residues 215–224 (GESVDFEKEN) are compositionally biased toward basic and acidic residues. Residues 323 to 446 (EIVTLVNNVE…QDLQNDCIEI (124 aa)) are a coiled coil. The KASH domain occupies 459–489 (SYVLIQLVLLSTVVLLLLSQLLPEPDTVVPT). A helical transmembrane segment spans residues 460 to 480 (YVLIQLVLLSTVVLLLLSQLL).

As to quaternary structure, homodimer and heterodimer with WIP2. Component of Ran complexes at least composed of WIT1 or WIT2, RANGAP1 or RANGAP2, and WIP1 or WIP2 or WIP3. Interacts with RANGAP1, RANGAP2, WPP1/MAF1, and WPP2/MAF2. Interacts with SUN1 and SUN2. Interacts with KIN1. Core component of the LINC complex which is composed of inner nuclear membrane SUN domain-containing proteins coupled to outer nuclear membrane WIP and WIT proteins. The LINC complex also involves nucleoskeletal proteins CRWN/LINC and possibly KAKU4 and the cytoskeletal myosin KAKU1. Interacts with WIT1 and SUN2. Interacts with WIT2. Interacts with SUN3. Expressed in seedlings, roots, stems, leaves, and flowers.

The protein resides in the nucleus envelope. The protein localises to the nucleus membrane. Mediates and enhances the nuclear envelope docking of RANGAP proteins mediated by WIT1 and WIT2 in the undifferentiated cells of root tips. As component of the SUN-WIP-WIT2-KAKU1 complex, mediates the transfer of cytoplasmic forces to the nuclear envelope (NE), leading to nuclear shape changes. This Arabidopsis thaliana (Mouse-ear cress) protein is WPP domain-interacting protein 1 (WIP1).